The primary structure comprises 514 residues: ATP synthase subunit alpha 2 (514 aa).

170-177 (GDRQTGKT) contributes to the ATP binding site.

This sequence belongs to the ATPase alpha/beta chains family. As to quaternary structure, F-type ATPases have 2 components, CF(1) - the catalytic core - and CF(0) - the membrane proton channel. CF(1) has five subunits: alpha(3), beta(3), gamma(1), delta(1), epsilon(1). CF(0) has three main subunits: a(1), b(2) and c(9-12). The alpha and beta chains form an alternating ring which encloses part of the gamma chain. CF(1) is attached to CF(0) by a central stalk formed by the gamma and epsilon chains, while a peripheral stalk is formed by the delta and b chains.

Its subcellular location is the cell inner membrane. It carries out the reaction ATP + H2O + 4 H(+)(in) = ADP + phosphate + 5 H(+)(out). In terms of biological role, produces ATP from ADP in the presence of a proton gradient across the membrane. The alpha chain is a regulatory subunit. The chain is ATP synthase subunit alpha 2 from Hahella chejuensis (strain KCTC 2396).